A 630-amino-acid chain; its full sequence is A disintegrin and metalloproteinase with thrombospondin motifs 4 (630 aa).

Residues 1 to 5 constitute a propeptide that is removed on maturation; sequence RRTKR. One can recognise a Peptidase M12B domain in the interval 11–221; that stretch reads RFVETLVVAD…GYGHCLLDKP (211 aa). Intrachain disulfides connect C86–C138, C115–C120, C132–C216, C170–C200, C242–C265, C253–C275, C260–C294, C288–C299, C325–C362, C329–C367, and C340–C352. The N-linked (GlcNAc...) asparagine glycan is linked to N96. H154 contributes to the Zn(2+) binding site. Residue E155 is part of the active site. H158 and H164 together coordinate Zn(2+). The Disintegrin domain maps to 233-303; that stretch reads GKDYDADRQC…CMGGRCLHVD (71 aa). The region spanning 313–368 is the TSP type-1 domain; it reads AGGWGPWGPWGDCSRTCGGGVQFSSRDCTKPVPRNGGKYCEGRRTPFRSCNTKNCP. N474 carries N-linked (GlcNAc...) asparagine glycosylation. Residues 479-630 are spacer; the sequence is SKQSGSFKKF…LRKRTWAGRK (152 aa).

Interacts with SRPX2. Requires Zn(2+) as cofactor. In terms of processing, the precursor is cleaved by a furin endopeptidase. Post-translationally, glycosylated. Can be O-fucosylated by POFUT2 on a serine or a threonine residue found within the consensus sequence C1-X(2)-(S/T)-C2-G of the TSP type-1 repeat domains where C1 and C2 are the first and second cysteine residue of the repeat, respectively. Fucosylated repeats can then be further glycosylated by the addition of a beta-1,3-glucose residue by the glucosyltransferase, B3GALTL. Fucosylation mediates the efficient secretion of ADAMTS family members. Can also be C-glycosylated with one or two mannose molecules on tryptophan residues within the consensus sequence W-X-X-W of the TPRs, and N-glycosylated. These other glycosylations can also facilitate secretion. In terms of tissue distribution, brain specific.

It localises to the secreted. It is found in the extracellular space. Its subcellular location is the extracellular matrix. It carries out the reaction Glutamyl endopeptidase. Bonds cleaved include 370-Thr-Glu-Gly-Glu-|-Ala-Arg-Gly-Ser-377 in the interglobular domain of mammalian aggrecan.. Functionally, cleaves aggrecan, a cartilage proteoglycan, at the '392-Glu-|-Ala-393' site and may be involved in its turnover. Also cleaves COMP. May play an important role in the destruction of aggrecan in arthritic diseases. The chain is A disintegrin and metalloproteinase with thrombospondin motifs 4 (Adamts4) from Rattus norvegicus (Rat).